We begin with the raw amino-acid sequence, 264 residues long: Undecaprenyl-diphosphatase (264 aa).

8 consecutive transmembrane segments (helical) span residues 1–21 (MDLI…FLPI), 39–59 (QGLA…AVYF), 87–107 (WYLI…DDLI), 111–131 (LRST…LWVA), 144–164 (IALS…IPGT), 187–207 (FSFL…GLQL), 208–228 (VLSA…LSAV), and 244–264 (IGML…FIAV).

The protein belongs to the UppP family.

It localises to the cell inner membrane. It catalyses the reaction di-trans,octa-cis-undecaprenyl diphosphate + H2O = di-trans,octa-cis-undecaprenyl phosphate + phosphate + H(+). Functionally, catalyzes the dephosphorylation of undecaprenyl diphosphate (UPP). Confers resistance to bacitracin. The chain is Undecaprenyl-diphosphatase from Teredinibacter turnerae (strain ATCC 39867 / T7901).